The sequence spans 755 residues: Elongation factor G, mitochondrial (755 aa).

A mitochondrion-targeting transit peptide spans 1–38 (MFKRVGLIAGIAGPVAGSSRFSAVSFSKRAFSASSKRC). Residues 63–344 (KKLRNIGISA…AIVEYLPNPS (282 aa)) enclose the tr-type G domain. GTP is bound by residues 72-79 (AHIDSGKT), 143-147 (DTPGH), and 197-200 (NKMD).

It belongs to the TRAFAC class translation factor GTPase superfamily. Classic translation factor GTPase family. EF-G/EF-2 subfamily.

The protein localises to the mitochondrion. Its pathway is protein biosynthesis; polypeptide chain elongation. Functionally, mitochondrial GTPase that catalyzes the GTP-dependent ribosomal translocation step during translation elongation. During this step, the ribosome changes from the pre-translocational (PRE) to the post-translocational (POST) state as the newly formed A-site-bound peptidyl-tRNA and P-site-bound deacylated tRNA move to the P and E sites, respectively. Catalyzes the coordinated movement of the two tRNA molecules, the mRNA and conformational changes in the ribosome. The polypeptide is Elongation factor G, mitochondrial (Kluyveromyces lactis (strain ATCC 8585 / CBS 2359 / DSM 70799 / NBRC 1267 / NRRL Y-1140 / WM37) (Yeast)).